A 916-amino-acid chain; its full sequence is Nonsense-mediated mRNA decay factor SMG8 (916 aa).

The disordered stretch occupies residues leucine 566–aspartate 626. Over residues leucine 589–phenylalanine 604 the composition is skewed to polar residues.

The protein belongs to the SMG8 family.

In terms of biological role, involved in nonsense-mediated decay (NMD) of mRNAs containing premature stop codons. Probable component of kinase complex containing SMG1 and recruited to stalled ribosomes. The sequence is that of Nonsense-mediated mRNA decay factor SMG8 from Aedes aegypti (Yellowfever mosquito).